We begin with the raw amino-acid sequence, 77 residues long: Acyl carrier protein (77 aa).

A Carrier domain is found at 1–76; the sequence is MSIEERVKKI…SAIDYVAKAN (76 aa). S36 carries the post-translational modification O-(pantetheine 4'-phosphoryl)serine.

This sequence belongs to the acyl carrier protein (ACP) family. In terms of processing, 4'-phosphopantetheine is transferred from CoA to a specific serine of apo-ACP by AcpS. This modification is essential for activity because fatty acids are bound in thioester linkage to the sulfhydryl of the prosthetic group.

Its subcellular location is the cytoplasm. The protein operates within lipid metabolism; fatty acid biosynthesis. Functionally, carrier of the growing fatty acid chain in fatty acid biosynthesis. This Haemophilus ducreyi (strain 35000HP / ATCC 700724) protein is Acyl carrier protein.